The following is a 62-amino-acid chain: uncharacterized protein (62 aa).

Residues 1 to 13 (MGESKSPQESSSE) are compositionally biased toward polar residues. Residues 1 to 62 (MGESKSPQES…SRREFRRKSG (62 aa)) form a disordered region. Basic and acidic residues predominate over residues 14-28 (GETKRKFREALDRKM).

This is an uncharacterized protein from Mycobacterium tuberculosis (strain ATCC 25618 / H37Rv).